Here is a 239-residue protein sequence, read N- to C-terminus: Methylthioribulose-1-phosphate dehydratase (239 aa).

Substrate is bound at residue C94. Positions 112 and 114 each coordinate Zn(2+). E136 (proton donor/acceptor) is an active-site residue. Residue H192 coordinates Zn(2+).

It belongs to the aldolase class II family. MtnB subfamily. Requires Zn(2+) as cofactor.

The protein resides in the cytoplasm. It catalyses the reaction 5-(methylsulfanyl)-D-ribulose 1-phosphate = 5-methylsulfanyl-2,3-dioxopentyl phosphate + H2O. It participates in amino-acid biosynthesis; L-methionine biosynthesis via salvage pathway; L-methionine from S-methyl-5-thio-alpha-D-ribose 1-phosphate: step 2/6. In terms of biological role, catalyzes the dehydration of methylthioribulose-1-phosphate (MTRu-1-P) into 2,3-diketo-5-methylthiopentyl-1-phosphate (DK-MTP-1-P). Functions in the methionine salvage pathway. May play a role in apoptosis. The chain is Methylthioribulose-1-phosphate dehydratase from Xenopus laevis (African clawed frog).